Here is a 1641-residue protein sequence, read N- to C-terminus: Alpha-2-macroglobulin (1641 aa).

The N-terminal stretch at Met-1–Gly-31 is a signal peptide. Cys-32 carries N-palmitoyl cysteine lipidation. Cys-32 carries S-diacylglycerol cysteine lipidation. A cross-link (isoglutamyl cysteine thioester (Cys-Gln)) is located at residues Cys-1166 to Gln-1169.

It belongs to the protease inhibitor I39 (alpha-2-macroglobulin) family. Bacterial alpha-2-macroglobulin subfamily.

The protein localises to the cell membrane. Functionally, protects the bacterial cell from host peptidases. The sequence is that of Alpha-2-macroglobulin from Xylella fastidiosa (strain Temecula1 / ATCC 700964).